Consider the following 95-residue polypeptide: Co-chaperonin GroES (95 aa).

It belongs to the GroES chaperonin family. In terms of assembly, heptamer of 7 subunits arranged in a ring. Interacts with the chaperonin GroEL.

The protein localises to the cytoplasm. Functionally, together with the chaperonin GroEL, plays an essential role in assisting protein folding. The GroEL-GroES system forms a nano-cage that allows encapsulation of the non-native substrate proteins and provides a physical environment optimized to promote and accelerate protein folding. GroES binds to the apical surface of the GroEL ring, thereby capping the opening of the GroEL channel. This chain is Co-chaperonin GroES, found in Francisella tularensis subsp. tularensis (strain FSC 198).